Reading from the N-terminus, the 364-residue chain is 3-methyl-2-oxobutanoate hydroxymethyltransferase 1, mitochondrial (364 aa).

The N-terminal 59 residues, 1 to 59 (MMMMMRRAFRHLARQQRRPLSHVPESAVYGGPRPQDVGAAAGAGAGAGATRRVTVTTLR), are a transit peptide targeting the mitochondrion. Mg(2+) contacts are provided by Asp94 and Asp133. 3-methyl-2-oxobutanoate is bound by residues 94–95 (DS), Asp133, and Lys163. Glu165 lines the Mg(2+) pocket. The Proton acceptor role is filled by Glu233.

This sequence belongs to the PanB family. It depends on Mg(2+) as a cofactor.

The protein resides in the mitochondrion. It catalyses the reaction 3-methyl-2-oxobutanoate + (6R)-5,10-methylene-5,6,7,8-tetrahydrofolate + H2O = 2-dehydropantoate + (6S)-5,6,7,8-tetrahydrofolate. The protein operates within cofactor biosynthesis; (R)-pantothenate biosynthesis; (R)-pantoate from 3-methyl-2-oxobutanoate: step 1/2. In terms of biological role, catalyzes the reversible reaction in which hydroxymethyl group from 5,10-methylenetetrahydrofolate is transferred onto alpha-ketoisovalerate to form ketopantoate. This is 3-methyl-2-oxobutanoate hydroxymethyltransferase 1, mitochondrial (KPHMT1) from Oryza sativa subsp. japonica (Rice).